The chain runs to 327 residues: T-cell surface glycoprotein CD1a (327 aa).

A signal peptide spans Met-1–Gly-16. Over Asn-17–Val-300 the chain is Extracellular. N-linked (GlcNAc...) asparagine glycans are attached at residues Asn-37, Asn-60, and Asn-74. Residue Arg-90–Ser-94 participates in a D-galactosylceramide binding. 2 disulfides stabilise this stretch: Cys-119-Cys-183 and Cys-223-Cys-278. Asn-145 is a glycosylation site (N-linked (GlcNAc...) asparagine). The a D-galactosylceramide site is built by Glu-171 and Thr-175. Residues Pro-184–Val-291 form the Ig-like domain. The chain crosses the membrane as a helical span at residues Gly-301 to Phe-321. Over Arg-322–Cys-327 the chain is Cytoplasmic.

Heterodimer with B2M (beta-2-microglobulin). Interacts with CD74. As to expression, expressed on cortical thymocytes, epidermal Langerhans cells, dendritic cells, on certain T-cell leukemias, and in various other tissues.

It is found in the cell membrane. It localises to the membrane raft. The protein localises to the endosome membrane. Antigen-presenting protein that binds self and non-self lipid and glycolipid antigens and presents them to T-cell receptors on natural killer T-cells. The sequence is that of T-cell surface glycoprotein CD1a (CD1A) from Homo sapiens (Human).